The following is a 162-amino-acid chain: Ribosome-binding factor A (162 aa).

The segment at 121–162 (DEVARVAAGASPAGDPDPYKEPRAEDADDAEVDEPSGSRQAD) is disordered. A compositionally biased stretch (low complexity) spans 125–136 (RVAAGASPAGDP).

It belongs to the RbfA family. Monomer. Binds 30S ribosomal subunits, but not 50S ribosomal subunits or 70S ribosomes.

It is found in the cytoplasm. Functionally, one of several proteins that assist in the late maturation steps of the functional core of the 30S ribosomal subunit. Associates with free 30S ribosomal subunits (but not with 30S subunits that are part of 70S ribosomes or polysomes). Required for efficient processing of 16S rRNA. May interact with the 5'-terminal helix region of 16S rRNA. The polypeptide is Ribosome-binding factor A (Rhodococcus jostii (strain RHA1)).